The primary structure comprises 67 residues: Cold shock protein ScoF (67 aa).

In terms of domain architecture, CSD spans 4–64 (GTVKWFNSEK…GQKGPQAENI (61 aa)).

The protein localises to the cytoplasm. The polypeptide is Cold shock protein ScoF (scoF) (Streptomyces coelicolor (strain ATCC BAA-471 / A3(2) / M145)).